The chain runs to 66 residues: Translational regulator CsrA (66 aa).

The protein belongs to the CsrA/RsmA family. As to quaternary structure, homodimer; the beta-strands of each monomer intercalate to form a hydrophobic core, while the alpha-helices form wings that extend away from the core.

The protein localises to the cytoplasm. A key translational regulator that binds mRNA to regulate translation initiation and/or mRNA stability. Mediates global changes in gene expression, shifting from rapid growth to stress survival by linking envelope stress, the stringent response and the catabolite repression systems. Usually binds in the 5'-UTR; binding at or near the Shine-Dalgarno sequence prevents ribosome-binding, repressing translation, binding elsewhere in the 5'-UTR can activate translation and/or stabilize the mRNA. Its function is antagonized by small RNA(s). The protein is Translational regulator CsrA of Alkalilimnicola ehrlichii (strain ATCC BAA-1101 / DSM 17681 / MLHE-1).